We begin with the raw amino-acid sequence, 321 residues long: Glucokinase (321 aa).

ATP is bound at residue 8–13 (GDVGGT).

Belongs to the bacterial glucokinase family.

Its subcellular location is the cytoplasm. It carries out the reaction D-glucose + ATP = D-glucose 6-phosphate + ADP + H(+). Its function is as follows. Not highly important in E.coli as glucose is transported into the cell by the PTS system already as glucose 6-phosphate. The protein is Glucokinase of Escherichia coli O139:H28 (strain E24377A / ETEC).